A 161-amino-acid polypeptide reads, in one-letter code: GTP-dependent dephospho-CoA kinase (161 aa).

Asp-40, Val-41, Val-42, Asp-59, and Glu-112 together coordinate GTP.

It belongs to the GTP-dependent DPCK family.

It catalyses the reaction 3'-dephospho-CoA + GTP = GDP + CoA + H(+). Its pathway is cofactor biosynthesis; coenzyme A biosynthesis. Catalyzes the GTP-dependent phosphorylation of the 3'-hydroxyl group of dephosphocoenzyme A to form coenzyme A (CoA). The chain is GTP-dependent dephospho-CoA kinase from Methanoculleus marisnigri (strain ATCC 35101 / DSM 1498 / JR1).